We begin with the raw amino-acid sequence, 267 residues long: Glutamate racemase (267 aa).

Residues Asp13 to Ser14 and Tyr45 to Ser46 each bind substrate. Cys77 serves as the catalytic Proton donor/acceptor. Asn78 to Thr79 provides a ligand contact to substrate. Cys188 functions as the Proton donor/acceptor in the catalytic mechanism. Thr189–His190 is a substrate binding site.

This sequence belongs to the aspartate/glutamate racemases family.

The catalysed reaction is L-glutamate = D-glutamate. It functions in the pathway cell wall biogenesis; peptidoglycan biosynthesis. In terms of biological role, provides the (R)-glutamate required for cell wall biosynthesis. In Histophilus somni (strain 2336) (Haemophilus somnus), this protein is Glutamate racemase.